A 403-amino-acid polypeptide reads, in one-letter code: S-adenosylmethionine sensor upstream of mTORC1 (403 aa).

Residues 1-10 are compositionally biased toward gly residues; it reads MEPGPGGRGA. The tract at residues 1–32 is disordered; the sequence is MEPGPGGRGAARGQRPPNAAQPREQERKLEQE. Residues 11–22 are compositionally biased toward low complexity; the sequence is ARGQRPPNAAQP. Positions 23-32 are enriched in basic and acidic residues; the sequence is REQERKLEQE. 6 residues coordinate S-adenosyl-L-methionine: R93, G170, D188, D200, F201, and S242.

This sequence belongs to the BMT2/SAMTOR family. Interacts with the GATOR1 complex; interaction is disrupted when SAMTOR binds S-adenosyl-L-methionine. Interacts with the KICSTOR complex; interaction is disrupted when SAMTOR binds S-adenosyl-L-methionine.

In terms of biological role, S-adenosyl-L-methionine-binding protein that acts as an inhibitor of mTORC1 signaling via interaction with the GATOR1 and KICSTOR complexes. Acts as a sensor of S-adenosyl-L-methionine to signal methionine sufficiency to mTORC1: in presence of methionine, binds S-adenosyl-L-methionine, leading to disrupt interaction with the GATOR1 and KICSTOR complexes and promote mTORC1 signaling. Upon methionine starvation, S-adenosyl-L-methionine levels are reduced, thereby promoting the association with GATOR1 and KICSTOR, leading to inhibit mTORC1 signaling. Probably also acts as a S-adenosyl-L-methionine-dependent methyltransferase. In Mus musculus (Mouse), this protein is S-adenosylmethionine sensor upstream of mTORC1.